The primary structure comprises 263 residues: HTH-type transcriptional repressor NanR (263 aa).

A disordered region spans residues 1 to 22 (MGLMNAFDSQTEDSSPAIGRNL). The 69-residue stretch at 30–98 (KKLSEMVEEE…NGERARVSRP (69 aa)) folds into the HTH gntR-type domain. Residues 58 to 77 (ERELMAFFNVGRPSVREALA) constitute a DNA-binding region (H-T-H motif).

It belongs to the NanR family.

In terms of biological role, transcriptional repressor that controls expression of the genes required for the catabolism of sialic acids. This is HTH-type transcriptional repressor NanR from Shigella boydii serotype 4 (strain Sb227).